The sequence spans 943 residues: MTDYKATLNLPDTAFPMKAGLPQREPQILQRWDSIGLYGKLREIGKDRPKFVLHDGPPYANGTIHIGHALNKILKDMILRSKTLSGFDAPYVPGWDCHGLPIEHKVEVTYGKNLGADKTRELCRAYATEQIEGQKSEFIRLGVLGEWDNPYKTMNFKNEAGEIRALAEIVKGGFVFKGLKPVNWCFDCGSALAEAEVEYEDKKSSTIDVAFPVADDAKLAEAFGLASLSKPAAIVIWTTTPWTIPANQALNVHPEFTYALVDVGDRLLVLAEEMVEACLARYELQGSVIATTTGSALELINFRHPFYDRLSPVYLADYVELGAGTGIVHSAPAYGVDDFVTCKAYGMVNDDILNPVQSNGVYAPSLEFFGGQFIFKANDSIIDKLSEVGSLLHTETIKHSYMHCWRHKTPLIYRATAQWFIGMDKEPTSGDTLRVRSLKAIEDTQFVPAWGQARLHSMIANRPDWCISRQRNWGVPIPFFLNKESGELHPRTVELMEEVAQRVELEGIEAWFKMDAAELLGDEAPQYDKISDTLDVWFDSGTTHWHVLRGSHPMGHETGPRADLYLEGSDQHRGWFHSSLLTGCAIDNHAPYRELLTHGFTVDETGRKMSKSLKNVIEPKKINDTLGADIMRLWVASTDYSGEIAVSDQILARSADAYRRIRNTARFLLSNLTGFNPATDILPAEDMLALDRWAVDRTLLLQRELQENYGEYRFWNVYSKIHNFCVQELGGFYLDIIKDRQYTTGANSKARRSAQTALYHISEALVRWIAPILAFTADELWEYLPGERNESVMLNTWYEGLTELPADFELGREYWEGVMAVKVAVNKELEVQRAAKAVGGNLQAEVTLFAEAGLTADLAKLSNELRFVLITSTASLAPFAQAPADAVATEVPGLKLKVVKSAFPKCARCWHCREDVGVNPEHPEICGRCVDNISGAGEVRHYA.

Residues proline 58–histidine 68 carry the 'HIGH' region motif. L-isoleucyl-5'-AMP is bound at residue glutamate 567. The 'KMSKS' region motif lies at lysine 608–serine 612. Lysine 611 lines the ATP pocket. Cysteine 906, cysteine 909, cysteine 926, and cysteine 929 together coordinate Zn(2+).

Belongs to the class-I aminoacyl-tRNA synthetase family. IleS type 1 subfamily. In terms of assembly, monomer. It depends on Zn(2+) as a cofactor.

The protein resides in the cytoplasm. The catalysed reaction is tRNA(Ile) + L-isoleucine + ATP = L-isoleucyl-tRNA(Ile) + AMP + diphosphate. Its function is as follows. Catalyzes the attachment of isoleucine to tRNA(Ile). As IleRS can inadvertently accommodate and process structurally similar amino acids such as valine, to avoid such errors it has two additional distinct tRNA(Ile)-dependent editing activities. One activity is designated as 'pretransfer' editing and involves the hydrolysis of activated Val-AMP. The other activity is designated 'posttransfer' editing and involves deacylation of mischarged Val-tRNA(Ile). The polypeptide is Isoleucine--tRNA ligase (Pseudomonas fluorescens (strain SBW25)).